A 109-amino-acid polypeptide reads, in one-letter code: Putative double-stranded DNA mimic protein YciU (109 aa).

This sequence belongs to the putative dsDNA mimic protein family.

Functionally, may act as a double-stranded DNA (dsDNA) mimic. Probably regulates the activity of a dsDNA-binding protein. The polypeptide is Putative double-stranded DNA mimic protein YciU (Salmonella arizonae (strain ATCC BAA-731 / CDC346-86 / RSK2980)).